The following is a 417-amino-acid chain: Phosphoglycerate kinase, cytosolic (417 aa).

Positions 23, 24, 25, 26, 39, 61, 62, 64, 65, 132, 168, and 169 each coordinate (2R)-3-phosphoglycerate. ADP-binding residues include Gly-214 and Ala-215. A CDP-binding site is contributed by Gly-214. AMP is bound by residues Ala-215 and Lys-216. Ala-215 serves as a coordination point for ATP. Ala-215 lines the Mg(2+) pocket. Position 216 (Lys-216) interacts with (2R)-3-phosphoglycerate. Asp-219 is a CDP binding site. Residue Asp-219 participates in Mg(2+) binding. ADP is bound by residues Lys-220 and Gly-238. Lys-220 serves as a coordination point for AMP. ATP is bound at residue Lys-220. Gly-238 is a CDP binding site. Residues Ala-239 and Ala-311 each contribute to the AMP site. Ala-239 and Ala-311 together coordinate ATP. Ala-311 and Asn-335 together coordinate ADP. 2 residues coordinate CDP: Gly-336 and Phe-341. ADP contacts are provided by Phe-341, Glu-342, Asp-374, and Thr-375. Glu-342 contacts AMP. Glu-342, Asp-374, and Thr-375 together coordinate ATP. Residue Asp-374 participates in Mg(2+) binding.

It belongs to the phosphoglycerate kinase family. As to quaternary structure, monomer. It depends on Mg(2+) as a cofactor.

It is found in the cytoplasm. The catalysed reaction is (2R)-3-phosphoglycerate + ATP = (2R)-3-phospho-glyceroyl phosphate + ADP. The protein operates within carbohydrate degradation; glycolysis; pyruvate from D-glyceraldehyde 3-phosphate: step 2/5. This Crithidia fasciculata protein is Phosphoglycerate kinase, cytosolic (PGKB).